The chain runs to 169 residues: S-ribosylhomocysteine lyase (169 aa).

Fe cation-binding residues include H54, H58, and C129.

This sequence belongs to the LuxS family. As to quaternary structure, homodimer. Fe cation is required as a cofactor.

The enzyme catalyses S-(5-deoxy-D-ribos-5-yl)-L-homocysteine = (S)-4,5-dihydroxypentane-2,3-dione + L-homocysteine. In terms of biological role, involved in the synthesis of autoinducer 2 (AI-2) which is secreted by bacteria and is used to communicate both the cell density and the metabolic potential of the environment. The regulation of gene expression in response to changes in cell density is called quorum sensing. Catalyzes the transformation of S-ribosylhomocysteine (RHC) to homocysteine (HC) and 4,5-dihydroxy-2,3-pentadione (DPD). The polypeptide is S-ribosylhomocysteine lyase (Glaesserella parasuis serovar 5 (strain SH0165) (Haemophilus parasuis)).